The following is a 629-amino-acid chain: (-)-alpha pinene synthase 1, chloroplastic (629 aa).

The N-terminal 48 residues, 1–48, are a transit peptide targeting the chloroplast; it reads MSPVSVISLPSDLCLPTSFIDRSGRELNPLHITIPNVAMRRQGKLMTR. 3 residues coordinate Mg(2+): D380, D384, and D532. The DDXXD motif motif lies at 380 to 384; sequence DDMYD.

Belongs to the terpene synthase family. Tpsd subfamily. It depends on Mg(2+) as a cofactor. Requires Mn(2+) as cofactor.

The protein resides in the plastid. Its subcellular location is the chloroplast. It carries out the reaction (2E)-geranyl diphosphate = (1S,5S)-alpha-pinene + diphosphate. It catalyses the reaction (2E)-geranyl diphosphate = (1S,5S)-beta-pinene + diphosphate. It functions in the pathway terpene metabolism; oleoresin biosynthesis. It participates in secondary metabolite biosynthesis; terpenoid biosynthesis. Functionally, monoterpene synthase (TPS) involved in the biosynthesis of monoterpene natural products included in conifer oleoresin secretions and volatile emissions; these compounds contribute to biotic and abiotic stress defense against herbivores and pathogens. Catalyzes the conversion of (2E)-geranyl diphosphate (GPP) to (-)-alpha-pinene and, to a lower extent, to (-)-beta-pinene. This is (-)-alpha pinene synthase 1, chloroplastic from Pinus contorta (Shore pine).